Here is a 92-residue protein sequence, read N- to C-terminus: Small ribosomal subunit protein uS19 (92 aa).

Belongs to the universal ribosomal protein uS19 family.

Its function is as follows. Protein S19 forms a complex with S13 that binds strongly to the 16S ribosomal RNA. The protein is Small ribosomal subunit protein uS19 of Leptospira biflexa serovar Patoc (strain Patoc 1 / Ames).